Consider the following 334-residue polypeptide: Methionyl-tRNA formyltransferase (334 aa).

111–114 (SILP) serves as a coordination point for (6S)-5,6,7,8-tetrahydrofolate.

Belongs to the Fmt family.

It carries out the reaction L-methionyl-tRNA(fMet) + (6R)-10-formyltetrahydrofolate = N-formyl-L-methionyl-tRNA(fMet) + (6S)-5,6,7,8-tetrahydrofolate + H(+). Attaches a formyl group to the free amino group of methionyl-tRNA(fMet). The formyl group appears to play a dual role in the initiator identity of N-formylmethionyl-tRNA by promoting its recognition by IF2 and preventing the misappropriation of this tRNA by the elongation apparatus. The sequence is that of Methionyl-tRNA formyltransferase from Gloeothece citriformis (strain PCC 7424) (Cyanothece sp. (strain PCC 7424)).